Reading from the N-terminus, the 251-residue chain is 5-oxoprolinase subunit A (251 aa).

The protein belongs to the LamB/PxpA family. As to quaternary structure, forms a complex composed of PxpA, PxpB and PxpC.

The catalysed reaction is 5-oxo-L-proline + ATP + 2 H2O = L-glutamate + ADP + phosphate + H(+). Catalyzes the cleavage of 5-oxoproline to form L-glutamate coupled to the hydrolysis of ATP to ADP and inorganic phosphate. This Vibrio parahaemolyticus serotype O3:K6 (strain RIMD 2210633) protein is 5-oxoprolinase subunit A.